The primary structure comprises 158 residues: Pyruvoyl-dependent arginine decarboxylase (158 aa).

Ser44 is modified (pyruvic acid (Ser)).

This sequence belongs to the PdaD family. Pyruvate is required as a cofactor.

The enzyme catalyses L-arginine + H(+) = agmatine + CO2. The sequence is that of Pyruvoyl-dependent arginine decarboxylase from Pyrococcus furiosus (strain ATCC 43587 / DSM 3638 / JCM 8422 / Vc1).